The primary structure comprises 663 residues: Probable potassium transport system protein Kup (663 aa).

A disordered region spans residues 1–23 (MSDNPSSRAGPEVVPTPPPSPAA). 12 helical membrane-spanning segments follow: residues 81-101 (PANV…VVTF), 137-157 (LLII…VITP), 173-193 (PALE…LFFI), 201-221 (VGAV…ILGV), 224-244 (ILFD…AFFA), 248-268 (WHGF…EALY), 283-303 (WLLV…AILL), 315-335 (LLVP…AAIV), 373-393 (IYVP…VLGF), 399-419 (LAAA…LLFH), 433-453 (AWPL…ANIV), and 455-475 (VEEG…LLST).

This sequence belongs to the HAK/KUP transporter (TC 2.A.72) family.

It is found in the cell inner membrane. The enzyme catalyses K(+)(in) + H(+)(in) = K(+)(out) + H(+)(out). Its function is as follows. Transport of potassium into the cell. Likely operates as a K(+):H(+) symporter. In Anaeromyxobacter sp. (strain Fw109-5), this protein is Probable potassium transport system protein Kup.